The sequence spans 1423 residues: Guanine nucleotide exchange factor subunit RIC1 (1423 aa).

WD repeat units follow at residues 64 to 103 (TQFG…GDKY) and 304 to 343 (NKTG…LICT). Residues 437–448 (ASQTQNPRSSST) show a composition bias toward polar residues. The disordered stretch occupies residues 437-463 (ASQTQNPRSSSTHSEHKPSREKSPFAD). Over residues 449-460 (HSEHKPSREKSP) the composition is skewed to basic and acidic residues. Phosphothreonine is present on residues T992 and T996. 5 positions are modified to phosphoserine: S1015, S1017, S1019, S1037, and S1172. The disordered stretch occupies residues 1355–1423 (PDAFQPITMG…QDGTYDCSVS (69 aa)). Positions 1379 to 1397 (GSSSHGSIPQGEVGSSNMV) are enriched in polar residues. Over residues 1404 to 1413 (TAQAEEEEPF) the composition is skewed to acidic residues.

The protein belongs to the RIC1 family. As to quaternary structure, forms a complex with RGP1; the interaction enhances RAB6A GTPase activity. Interacts (via central domain) with RGP1. Interacts with RAB6A; the interaction is direct with a preference for RAB6A-GDP. Interacts (via C-terminus domain) with RAB33B; the interaction is direct with a preference for RAB33B-GTP. Interacts with GJA1. In terms of tissue distribution, present in kidney and various cell lines (at protein level). Widely expressed at low level.

The protein resides in the cytoplasm. It is found in the cytosol. Its subcellular location is the membrane. The RIC1-RGP1 complex acts as a guanine nucleotide exchange factor (GEF), which activates RAB6A by exchanging bound GDP for free GTP, and may thereby be required for efficient fusion of endosome-derived vesicles with the Golgi compartment. The RIC1-RGP1 complex participates in the recycling of mannose-6-phosphate receptors. Required for phosphorylation and localization of GJA1. Is a regulator of procollagen transport and secretion, and is required for correct cartilage morphogenesis and development of the craniofacial skeleton. This chain is Guanine nucleotide exchange factor subunit RIC1, found in Homo sapiens (Human).